The sequence spans 747 residues: Photosystem I P700 chlorophyll a apoprotein A2 (747 aa).

The next 8 helical transmembrane spans lie at 46-69, 135-158, 175-199, 273-291, 341-364, 380-406, 428-450, and 530-548; these read LFAT…FHIA, LFQG…LHLQ, LNHH…HVAI, IAHH…GHMY, LHFQ…QHMG, SALY…IFFV, ALIS…IYVH, and FLVH…LILI. Residues Cys572 and Cys581 each contribute to the [4Fe-4S] cluster site. The next 2 helical transmembrane spans lie at 588–609 and 656–678; these read ATYL…YWHW and LSPW…MFLI. His667, Met675, and Tyr683 together coordinate divinyl chlorophyll a. Trp684 lines the phylloquinone pocket. A helical transmembrane segment spans residues 720-740; the sequence is LVGLTHFTVGNFVTFGAFVIA.

The protein belongs to the PsaA/PsaB family. The PsaA/B heterodimer binds the P700 divinyl chlorophyll special pair and subsequent electron acceptors. PSI consists of a core antenna complex that captures photons, and an electron transfer chain that converts photonic excitation into a charge separation. The cyanobacterial PSI reaction center is composed of one copy each of PsaA,B,C,D,E,F,I,J,K,L,M and X, and forms trimeric complexes. Requires PSI electron transfer chain: 5 divinyl chlorophyll a, 1 divinyl chlorophyll a', 2 phylloquinones and 3 4Fe-4S clusters. PSI core antenna: 90 divinyl chlorophyll a, 22 carotenoids, 3 phospholipids and 1 galactolipid. P700 is a divinyl chlorophyll a/divinyl chlorophyll a' dimer, A0 is one or more divinyl chlorophyll a, A1 is one or both phylloquinones and FX is a shared 4Fe-4S iron-sulfur center. as cofactor.

The protein localises to the cellular thylakoid membrane. The enzyme catalyses reduced [plastocyanin] + hnu + oxidized [2Fe-2S]-[ferredoxin] = oxidized [plastocyanin] + reduced [2Fe-2S]-[ferredoxin]. Its function is as follows. PsaA and PsaB bind P700, the primary electron donor of photosystem I (PSI), as well as the electron acceptors A0, A1 and FX. PSI is a plastocyanin/cytochrome c6-ferredoxin oxidoreductase, converting photonic excitation into a charge separation, which transfers an electron from the donor P700 chlorophyll pair to the spectroscopically characterized acceptors A0, A1, FX, FA and FB in turn. Oxidized P700 is reduced on the lumenal side of the thylakoid membrane by plastocyanin or cytochrome c6. This Prochlorococcus marinus (strain SARG / CCMP1375 / SS120) protein is Photosystem I P700 chlorophyll a apoprotein A2.